We begin with the raw amino-acid sequence, 337 residues long: G-protein coupled receptor 26 (337 aa).

Residues 1–10 are Extracellular-facing; that stretch reads MNSWDAGLAG. Residues 11-31 traverse the membrane as a helical segment; it reads LLVGTIGVSLLSNGLVLLCLL. Residues 32-47 lie on the Cytoplasmic side of the membrane; the sequence is HSADIRRQAPALFTLN. A helical membrane pass occupies residues 48-68; it reads LTCGNLLCTVVNMPLTLAGVV. The Extracellular segment spans residues 69–81; the sequence is AQRQPAGDRLCRL. A disulfide bridge connects residues Cys-79 and Cys-156. A helical membrane pass occupies residues 82-102; that stretch reads AAFLDTFLAANSMLSMAALSI. Residues 103–123 are Cytoplasmic-facing; it reads DRWVAVVFPLSYRAKMRLRDA. Residues 124 to 144 traverse the membrane as a helical segment; it reads AFMVAYTWLHALTFPATALAL. The Extracellular segment spans residues 145–168; that stretch reads SWLGFHQLYASCTLCSRRPDERLR. A helical membrane pass occupies residues 169 to 189; sequence FAVFTSAFHALSFLLSFIVLC. At 190–245 the chain is on the cytoplasmic side; sequence FTYLKVLKVARFHCKRIDVITMQTLVLLVDIHPSVRERCLEEQKRRRQRATKKIST. A helical transmembrane segment spans residues 246-266; the sequence is FIGTFLVCFAPYVITRLVELF. At 267-276 the chain is on the extracellular side; the sequence is STAPIDSHWG. A helical transmembrane segment spans residues 277–297; sequence VLSKCLAYSKAASDPFVYSLL. The Cytoplasmic portion of the chain corresponds to 298–337; it reads RHQYRRSCKELLNRIFNRRSIHSVGLTGDSHSQNILPVSE.

It belongs to the G-protein coupled receptor 1 family. In terms of tissue distribution, detected in extracts of several brain regions including striatum, pons, cerebellum and cortex. Not detected in numerous peripheral tissue extracts, except in testis. In the brain, detected in cortical structures including the anterior cingulate area, posterior cingulate and the frontoparietal, somatosensory and piriform cortices. Prominent also in the olfactory tubercle, the islands of Calleja, ventromedial and posterior nuclei of the hypothalamus, the medial septal nucleus, nucleus of the diagonal band and the ventral tegmental area. Localized also to hippocampal structures, with signals strongest over the CA2 and CA3 regions of Ammon's horn and less so over the dentate gyrus. Expressed in the caudate putamen only in its most caudal portion, with a decreasing gradient of signal from the dorsal to ventral aspect. Strong expression associated with a single pontine structure, the inferior olivary nucleus.

It is found in the cell membrane. Orphan receptor. Displays a significant level of constitutive activity. Its effect is mediated by G(s)-alpha protein that stimulate adenylate cyclase, resulting in an elevation of intracellular cAMP. The chain is G-protein coupled receptor 26 (Gpr26) from Rattus norvegicus (Rat).